Reading from the N-terminus, the 155-residue chain is Small ribosomal subunit protein uS9 (155 aa).

It belongs to the universal ribosomal protein uS9 family.

The sequence is that of Small ribosomal subunit protein uS9 from Rhizobium johnstonii (strain DSM 114642 / LMG 32736 / 3841) (Rhizobium leguminosarum bv. viciae).